Here is a 515-residue protein sequence, read N- to C-terminus: Membrane-bound lytic murein transglycosylase F (515 aa).

The N-terminal stretch at 1 to 32 is a signal peptide; the sequence is MKKLKINYLFIGILTLLLAAALWPSIPWFGKA. Residues 33–269 are non-LT domain; that stretch reads DNRIAAIQSR…RMEEKYLGHG (237 aa). The LT domain stretch occupies residues 270–515; sequence DDFDYVDTRT…PFSLKKKDEN (246 aa). The active site involves Glu314. Positions 493–515 are disordered; that stretch reads QPSSNYLSHSPSLPFSLKKKDEN.

The protein in the N-terminal section; belongs to the bacterial solute-binding protein 3 family. This sequence in the C-terminal section; belongs to the transglycosylase Slt family.

It localises to the cell outer membrane. The enzyme catalyses Exolytic cleavage of the (1-&gt;4)-beta-glycosidic linkage between N-acetylmuramic acid (MurNAc) and N-acetylglucosamine (GlcNAc) residues in peptidoglycan, from either the reducing or the non-reducing ends of the peptidoglycan chains, with concomitant formation of a 1,6-anhydrobond in the MurNAc residue.. Murein-degrading enzyme that degrades murein glycan strands and insoluble, high-molecular weight murein sacculi, with the concomitant formation of a 1,6-anhydromuramoyl product. Lytic transglycosylases (LTs) play an integral role in the metabolism of the peptidoglycan (PG) sacculus. Their lytic action creates space within the PG sacculus to allow for its expansion as well as for the insertion of various structures such as secretion systems and flagella. This chain is Membrane-bound lytic murein transglycosylase F, found in Citrobacter koseri (strain ATCC BAA-895 / CDC 4225-83 / SGSC4696).